We begin with the raw amino-acid sequence, 543 residues long: Protein lin-14 (543 aa).

Disordered regions lie at residues 165–228 and 268–291; these read PNGH…SSNH and APAT…PRKP. Residues 177 to 213 are compositionally biased toward polar residues; that stretch reads SMQTDEQQVKWSSPSSVDSNGQKTDSSAASAGDNQNI. The segment covering 268-282 has biased composition (low complexity); sequence APATNGTTNGATKAA.

In terms of processing, cleaved by caspase ced-3 in vitro.

Its subcellular location is the nucleus. Functionally, heterochronic protein which controls the choice of stage specific cell fates. Involved in the temporal progression of vulval fate patterning, possibly by inhibiting lin-12. Acts as a transcription factor involved in the stage-specific repression of insulin/insulin-like growth factor gene ins-33. This Caenorhabditis briggsae protein is Protein lin-14 (lin-14).